The primary structure comprises 691 residues: Elongation factor G 1 (691 aa).

The tr-type G domain maps to 8–282 (ERVRNIGIAA…AVVDYLPAPQ (275 aa)). Residues 17–24 (AHIDAGKT), 81–85 (DTPGH), and 135–138 (NKMD) each bind GTP.

The protein belongs to the TRAFAC class translation factor GTPase superfamily. Classic translation factor GTPase family. EF-G/EF-2 subfamily.

It is found in the cytoplasm. In terms of biological role, catalyzes the GTP-dependent ribosomal translocation step during translation elongation. During this step, the ribosome changes from the pre-translocational (PRE) to the post-translocational (POST) state as the newly formed A-site-bound peptidyl-tRNA and P-site-bound deacylated tRNA move to the P and E sites, respectively. Catalyzes the coordinated movement of the two tRNA molecules, the mRNA and conformational changes in the ribosome. In Trichodesmium erythraeum (strain IMS101), this protein is Elongation factor G 1.